The primary structure comprises 527 residues: MAIKATDLSAIIKAQIKDFNQNVTFDEVGRVITVGDGIALVSGLNNVEYGELVQFESGVLGMTMNLEEDLVGIVVMGDDRSIVEGNLVKRMRQVISTPVGDELLGRVVNALAKPIDGKGKINTSYHAPIFKVAPGVMARQEVNEPLETGILAIDAMIPIGKGQRELIIGDRQTGKTAIAIDTILNQKGKHVYCIYIAIGQKNSTISQIVDILNKHDALKYTTIISASAAESAPLQYIAPYTGVTIAEEWMAKGKDVLVIYDDLSKHAVAYRTLSLLLRRPPGREAYPGDVFYLHSQLLERAARLNKENGGGSITALPIIETQAEDISAYIPTNVISITDGQIFTKESLFNSGQRPAIDIGYSVSRVGSAAQTKLMKKVVSSLKLELAQYNEMLAFAQFGSDLDQNTRNILEHGAKVYELLKQPQYSPYEQIKQILILFCSKYRLINPIPKAYITKYRDELLNYFLTNSKTLQVISQLTKASDWTEELIESVWEHIMAFNESFIPTIPNLNKYQGQEIPPLPWKAYKK.

G169–T176 contributes to the ATP binding site.

Belongs to the ATPase alpha/beta chains family. In terms of assembly, F-type ATPases have 2 components, CF(1) - the catalytic core - and CF(0) - the membrane proton channel. CF(1) has five subunits: alpha(3), beta(3), gamma(1), delta(1), epsilon(1). CF(0) has three main subunits: a(1), b(2) and c(9-12). The alpha and beta chains form an alternating ring which encloses part of the gamma chain. CF(1) is attached to CF(0) by a central stalk formed by the gamma and epsilon chains, while a peripheral stalk is formed by the delta and b chains.

Its subcellular location is the cell membrane. It carries out the reaction ATP + H2O + 4 H(+)(in) = ADP + phosphate + 5 H(+)(out). Produces ATP from ADP in the presence of a proton gradient across the membrane. The alpha chain is a regulatory subunit. The polypeptide is ATP synthase subunit alpha (Metamycoplasma arthritidis (strain 158L3-1) (Mycoplasma arthritidis)).